The sequence spans 108 residues: UPF0060 membrane protein Msil_1658 (108 aa).

The next 4 helical transmembrane spans lie at L5–L25, S31–I51, A62–W82, and L88–A108.

The protein belongs to the UPF0060 family.

The protein localises to the cell inner membrane. The polypeptide is UPF0060 membrane protein Msil_1658 (Methylocella silvestris (strain DSM 15510 / CIP 108128 / LMG 27833 / NCIMB 13906 / BL2)).